The primary structure comprises 395 residues: Vascular endothelial growth factor A, long form (395 aa).

Disordered regions lie at residues 1-45 (MTDR…VEGV) and 73-175 (EAEP…AGPG). Residues 73–85 (EAEPSGAARSASS) show a composition bias toward low complexity. Positions 91-102 (QPEEGEEEEEKE) are enriched in acidic residues. Low complexity-rich tracts occupy residues 123–143 (AAVC…ARAS) and 165–175 (RRGSASRAGPG). Cystine bridges form between cysteine 232–cysteine 274, cysteine 263–cysteine 308, and cysteine 267–cysteine 310. Residue asparagine 281 is glycosylated (N-linked (GlcNAc...) asparagine). Basic and acidic residues predominate over residues 314–323 (KDRARQEKKS). The interval 314-344 (KDRARQEKKSVRGKGKGQKRKRKKSRYKSWS) is disordered. The segment covering 324–340 (VRGKGKGQKRKRKKSRY) has biased composition (basic residues).

It belongs to the PDGF/VEGF growth factor family. As to quaternary structure, homodimer; disulfide-linked. Also found as heterodimer with PGF. Interacts with NRP1. Interacts with isoform 2 of BSG. Interacts with CD82; this interaction inhibits VEGFA-mediated signaling pathway. Post-translationally, produced by use of an alternative upstream CUG codon and post-translationally processed into the N-terminal N-VEGF form and the C-terminal secreted VEGFA form. As to expression, higher expression in pituitary tumors than the pituitary gland. Widely expressed. In terms of tissue distribution, not widely expressed.

The protein localises to the cytoplasm. Its subcellular location is the nucleus. The protein resides in the secreted. It is found in the endoplasmic reticulum. It localises to the golgi apparatus. The protein localises to the extracellular space. Its subcellular location is the extracellular matrix. In terms of biological role, participates in the induction of key genes involved in the response to hypoxia and in the induction of angiogenesis such as HIF1A. Involved in protecting cells from hypoxia-mediated cell death. Functionally, growth factor active in angiogenesis, vasculogenesis and endothelial cell growth. Induces endothelial cell proliferation, promotes cell migration, inhibits apoptosis and induces permeabilization of blood vessels. Binds to the FLT1/VEGFR1 and KDR/VEGFR2 receptors, heparan sulfate and heparin. Binds to the NRP1/neuropilin-1 receptor. Binding to NRP1 initiates a signaling pathway needed for motor neuron axon guidance and cell body migration, including for the caudal migration of facial motor neurons from rhombomere 4 to rhombomere 6 during embryonic development. Also binds the DEAR/FBXW7-AS1 receptor. Its function is as follows. Binds to the KDR receptor but does not activate downstream signaling pathways, does not activate angiogenesis and inhibits tumor growth. The polypeptide is Vascular endothelial growth factor A, long form (VEGFA) (Homo sapiens (Human)).